Consider the following 255-residue polypeptide: Methanethiol S-methyltransferase (255 aa).

The next 5 membrane-spanning stretches (helical) occupy residues 16-36, 56-76, 99-119, 131-151, and 191-211; these read FVLL…VYAV, LVTA…QHSV, YVLF…PIGI, IIFY…TFLI, and VGWF…LVFA.

The protein belongs to the nurim family.

It localises to the membrane. It carries out the reaction methanethiol + S-adenosyl-L-methionine = dimethyl sulfide + S-adenosyl-L-homocysteine + H(+). In terms of biological role, catalyzes the methylation of methanethiol (MeSH) to yield dimethylsulphide (DMS). This is Methanethiol S-methyltransferase from Crocosphaera subtropica (strain ATCC 51142 / BH68) (Cyanothece sp. (strain ATCC 51142)).